The chain runs to 411 residues: Dual-specificity RNA methyltransferase RlmN (411 aa).

The active-site Proton acceptor is the glutamate 125. The region spanning 131–380 (EEGRGTLCIS…IRTPRGRDIL (250 aa)) is the Radical SAM core domain. Cysteine 138 and cysteine 383 are oxidised to a cystine. [4Fe-4S] cluster contacts are provided by cysteine 145, cysteine 149, and cysteine 152. Residues 209-210 (GE), serine 241, 263-265 (SLH), and asparagine 340 each bind S-adenosyl-L-methionine. Cysteine 383 functions as the S-methylcysteine intermediate in the catalytic mechanism.

Belongs to the radical SAM superfamily. RlmN family. Requires [4Fe-4S] cluster as cofactor.

It localises to the cytoplasm. It carries out the reaction adenosine(2503) in 23S rRNA + 2 reduced [2Fe-2S]-[ferredoxin] + 2 S-adenosyl-L-methionine = 2-methyladenosine(2503) in 23S rRNA + 5'-deoxyadenosine + L-methionine + 2 oxidized [2Fe-2S]-[ferredoxin] + S-adenosyl-L-homocysteine. The catalysed reaction is adenosine(37) in tRNA + 2 reduced [2Fe-2S]-[ferredoxin] + 2 S-adenosyl-L-methionine = 2-methyladenosine(37) in tRNA + 5'-deoxyadenosine + L-methionine + 2 oxidized [2Fe-2S]-[ferredoxin] + S-adenosyl-L-homocysteine. Specifically methylates position 2 of adenine 2503 in 23S rRNA and position 2 of adenine 37 in tRNAs. m2A2503 modification seems to play a crucial role in the proofreading step occurring at the peptidyl transferase center and thus would serve to optimize ribosomal fidelity. The protein is Dual-specificity RNA methyltransferase RlmN of Brucella melitensis biotype 2 (strain ATCC 23457).